The following is a 686-amino-acid chain: UvrABC system protein C (686 aa).

The span at 1–14 (MVHDSTDDPDDTRV) shows a compositional bias: basic and acidic residues. Residues 1 to 48 (MVHDSTDDPDDTRVRKSRRGTALDAPPQETAPPDLDPATTGGDDEDDA) are disordered. Positions 81–160 (TSPGVYRMLN…IKQLRPRFNV (80 aa)) constitute a GIY-YIG domain. The region spanning 270–305 (HAVKQELAGEMEKAANELEFETAALYRDRLAALSAI) is the UVR domain.

Belongs to the UvrC family. In terms of assembly, interacts with UvrB in an incision complex.

The protein resides in the cytoplasm. Its function is as follows. The UvrABC repair system catalyzes the recognition and processing of DNA lesions. UvrC both incises the 5' and 3' sides of the lesion. The N-terminal half is responsible for the 3' incision and the C-terminal half is responsible for the 5' incision. The protein is UvrABC system protein C of Bradyrhizobium diazoefficiens (strain JCM 10833 / BCRC 13528 / IAM 13628 / NBRC 14792 / USDA 110).